The sequence spans 649 residues: Macrolide export ATP-binding/permease protein MacB (649 aa).

The ABC transporter domain maps to 7 to 245 (IELKNIVRRY…SSAQEVTPQL (239 aa)). An ATP-binding site is contributed by 43-50 (GASGSGKS). Helical transmembrane passes span 276–296 (LLTM…IALG), 529–549 (IAFI…LVSV), 582–602 (LLGG…FSAF), and 612–632 (FSSF…FGYF).

Belongs to the ABC transporter superfamily. Macrolide exporter (TC 3.A.1.122) family. As to quaternary structure, homodimer. Part of the tripartite efflux system MacAB-TolC, which is composed of an inner membrane transporter, MacB, a periplasmic membrane fusion protein, MacA, and an outer membrane component, TolC. The complex forms a large protein conduit and can translocate molecules across both the inner and outer membranes. Interacts with MacA.

Its subcellular location is the cell inner membrane. Functionally, part of the tripartite efflux system MacAB-TolC. MacB is a non-canonical ABC transporter that contains transmembrane domains (TMD), which form a pore in the inner membrane, and an ATP-binding domain (NBD), which is responsible for energy generation. Confers resistance against macrolides. The sequence is that of Macrolide export ATP-binding/permease protein MacB from Pasteurella multocida (strain Pm70).